The primary structure comprises 584 residues: Major capsid protein (584 aa).

It belongs to the NCLDV major capsid protein family.

It localises to the virion. Functionally, major protein of the capsid. The protein is Major capsid protein (MCP) of Haptolina ericina (CeV01).